Reading from the N-terminus, the 201-residue chain is MAQLYFYYSAMNAGKSTSLLQSSYNYNERGMRTLVFTAEIDTRFENGKVNSRIGLSSDALLFSQQTDIGELIRNENKQAKVHCVLIDECHFLTKAQIEQICKVTDYDDIPVLCYGLRTDFRGELFSGSQYLLAWADKLVELKTICYCGRKANRVLRFDSEGAAIYDGEQVDIGGNEKYVSVCRKHYMEAINEARKNRKDSV.

ATP contacts are provided by residues 9 to 16 (SAMNAGKS) and 87 to 90 (DECH). The Proton acceptor role is filled by Glu88. Residues Cys145, Cys147, Cys182, and His185 each coordinate Zn(2+).

It belongs to the thymidine kinase family. Homotetramer.

Its subcellular location is the cytoplasm. The enzyme catalyses thymidine + ATP = dTMP + ADP + H(+). In Photorhabdus laumondii subsp. laumondii (strain DSM 15139 / CIP 105565 / TT01) (Photorhabdus luminescens subsp. laumondii), this protein is Thymidine kinase.